The primary structure comprises 282 residues: Shikimate dehydrogenase (NADP(+)) (282 aa).

Residues 24–26 and Thr-71 each bind shikimate; that span reads SRS. Lys-75 acts as the Proton acceptor in catalysis. Asp-87 contributes to the NADP(+) binding site. Shikimate-binding residues include Asn-96 and Asp-112. NADP(+) is bound by residues 138-142, 162-167, and Leu-227; these read GAGGA and NRTRIR. Residue Tyr-229 coordinates shikimate. An NADP(+)-binding site is contributed by Gly-250.

This sequence belongs to the shikimate dehydrogenase family. In terms of assembly, homodimer.

The catalysed reaction is shikimate + NADP(+) = 3-dehydroshikimate + NADPH + H(+). It functions in the pathway metabolic intermediate biosynthesis; chorismate biosynthesis; chorismate from D-erythrose 4-phosphate and phosphoenolpyruvate: step 4/7. Involved in the biosynthesis of the chorismate, which leads to the biosynthesis of aromatic amino acids. Catalyzes the reversible NADPH linked reduction of 3-dehydroshikimate (DHSA) to yield shikimate (SA). In Paracoccus denitrificans (strain Pd 1222), this protein is Shikimate dehydrogenase (NADP(+)).